A 502-amino-acid chain; its full sequence is Maturase K (502 aa).

It belongs to the intron maturase 2 family. MatK subfamily.

Its subcellular location is the plastid. It localises to the chloroplast. In terms of biological role, usually encoded in the trnK tRNA gene intron. Probably assists in splicing its own and other chloroplast group II introns. Binds its homologous trnK precursor transcript. The protein is Maturase K of Sinapis alba (White mustard).